Reading from the N-terminus, the 467-residue chain is Proton extrusion protein PxcA (467 aa).

Residues 146–161 (SQVRTTSSQPPENPSL) show a composition bias toward polar residues. Disordered stretches follow at residues 146-167 (SQVRTTSSQPPENPSLTDALRT) and 186-205 (PQLIKQRTEQSKKSRGKADT). The span at 191–203 (QRTEQSKKSRGKA) shows a compositional bias: basic and acidic residues. 4 helical membrane passes run 249–269 (FILLIIIVPLLTHQLSKALIV), 352–372 (IFSVGAFIWLLLVSKPSIMVL), 391–411 (IIILFTDVFVGFHSPHGWEVI), and 427–447 (FIFLFIATFPVILDTIFKYWI).

The protein belongs to the CemA family.

The protein resides in the cell inner membrane. Functionally, required for H(+) efflux immediately after light irradiation to form a rapid H(+) concentration gradient across the thylakoid membranes. Together with PxcL, contributes to transient H(+) uptake following dark to light transition. This chain is Proton extrusion protein PxcA, found in Nostoc sp. (strain PCC 7120 / SAG 25.82 / UTEX 2576).